A 530-amino-acid chain; its full sequence is Chaperonin GroEL, chloroplastic (530 aa).

ATP-binding positions include 29 to 32, 86 to 90, G414, 480 to 482, and D496; these read TLGP, DGTTT, and DAL.

It belongs to the chaperonin (HSP60) family. Forms a cylinder of 14 subunits composed of two heptameric rings stacked back-to-back. Interacts with the co-chaperonin GroES.

It is found in the plastid. It localises to the chloroplast. The catalysed reaction is ATP + H2O + a folded polypeptide = ADP + phosphate + an unfolded polypeptide.. Its function is as follows. Together with its co-chaperonin GroES, plays an essential role in assisting protein folding. The GroEL-GroES system forms a nano-cage that allows encapsulation of the non-native substrate proteins and provides a physical environment optimized to promote and accelerate protein folding. This Cyanidium caldarium (Red alga) protein is Chaperonin GroEL, chloroplastic.